A 541-amino-acid polypeptide reads, in one-letter code: Synaptotagmin-1 (541 aa).

At 1-11 (MGFFSTILGFC) the chain is on the extracellular side. A helical membrane pass occupies residues 12-32 (GFGVGISLGLVIGYVLFVYLL). The Cytoplasmic segment spans residues 33-541 (PNDVKDPEIR…QIELEWRTAS (509 aa)). The SMP-LTD domain maps to 67–249 (DFDRVDWINR…WPKTLVVPIL (183 aa)). The segment at 227 to 509 (QEQIKDQVAN…TLGYVDIPVV (283 aa)) is phospholipid binding. C2 domains are found at residues 240–362 (WPKT…AFTL) and 401–521 (GFEE…NQKF). The Ca(2+) site is built by D276, D282, D332, and E334.

It belongs to the synaptotagmin family. In terms of assembly, interacts with cabbage leaf curl virus (CaLCuV) BC1 protein and tobacco mosaic virus (TMV) MP protein. Interacts with ROSY1. Ca(2+) serves as cofactor. As to expression, expressed in roots, shoots, rosette and cauline leaves, inflorescences, and siliques. In roots, expressed in vascular bundle, epidermis, the differential zone of the tips of root hairs, and the quiescent center and columella of root tips.

The protein resides in the cell membrane. It is found in the endosome membrane. In terms of biological role, plays an important role in maintaining plasma membrane integrity during freezing and osmotic stresses. May function in membrane resealing during calcium-dependent freezing tolerance. May regulate endocytosis and endosome recycling at the plasma membrane and cell-to-cell trafficking of cabbage leaf curl virus (CaLCuV) and tobacco mosaic virus (TMV) movement proteins via plasmodesmata. In Arabidopsis thaliana (Mouse-ear cress), this protein is Synaptotagmin-1 (SYT1).